The sequence spans 444 residues: Ribulose bisphosphate carboxylase (444 aa).

Lys-163 acts as the Proton acceptor in catalysis. Lys-165 is a binding site for substrate. 3 residues coordinate Mg(2+): Lys-189, Asp-191, and Glu-192. Lys-189 is subject to N6-carboxylysine. His-281 acts as the Proton acceptor in catalysis. Residues Arg-282, His-314, Ser-367–Gly-369, and Gln-389–Gly-392 each bind substrate.

Belongs to the RuBisCO large chain family. Type III subfamily. Homodimer or homodecamer. In contrast to form I RuBisCO, the form III RuBisCO is composed solely of large subunits. Mg(2+) is required as a cofactor.

The enzyme catalyses 2 (2R)-3-phosphoglycerate + 2 H(+) = D-ribulose 1,5-bisphosphate + CO2 + H2O. It carries out the reaction D-ribulose 1,5-bisphosphate + O2 = 2-phosphoglycolate + (2R)-3-phosphoglycerate + 2 H(+). Catalyzes the addition of molecular CO(2) and H(2)O to ribulose 1,5-bisphosphate (RuBP), generating two molecules of 3-phosphoglycerate (3-PGA). Functions in an archaeal AMP degradation pathway, together with AMP phosphorylase and R15P isomerase. This chain is Ribulose bisphosphate carboxylase, found in Thermococcus onnurineus (strain NA1).